The sequence spans 101 residues: Small ribosomal subunit protein uS14 (101 aa).

It belongs to the universal ribosomal protein uS14 family. As to quaternary structure, part of the 30S ribosomal subunit. Contacts proteins S3 and S10.

Binds 16S rRNA, required for the assembly of 30S particles and may also be responsible for determining the conformation of the 16S rRNA at the A site. This Bartonella bacilliformis (strain ATCC 35685 / KC583 / Herrer 020/F12,63) protein is Small ribosomal subunit protein uS14.